Consider the following 289-residue polypeptide: MELLCGEVEPVRRAVPDANLLHDDRVLQNLLTIEERYLPQCSYFKCVQKDIQPYMRRMVATWMLEVCEEQKCEEEVFPLAINYLDRFLAGVPTPKTHLQLLGAVCMFLASKLKETIPLTAEKLCIYTDNSIKPQELLEWELVVLGKLKWNLAAVTPHDFIEHILRKLPQPSEKLSLIRKHAQTFIALCATDFKFAMYPPSMIATGSVGAAICGLQQDEDVSSLTGDALVDLLAKITNTDVDCLKACQEQIEVVLLNSLQQYRQDQGDGSKSEDELDQASTPTDVRDIDL.

In terms of domain architecture, Cyclin N-terminal spans 26-151 (VLQNLLTIEE…VVLGKLKWNL (126 aa)). The disordered stretch occupies residues 264–289 (DQGDGSKSEDELDQASTPTDVRDIDL). Position 271 is a phosphoserine (serine 271). Threonine 280 is modified (phosphothreonine).

This sequence belongs to the cyclin family. Cyclin D subfamily. As to quaternary structure, interacts with either CDK4 or CDK6 protein kinase to form a serine/threonine kinase holoenzyme complex. The cyclin subunit imparts substrate specificity to the complex. In terms of processing, phosphorylation at Thr-280 by MAP kinases is required for ubiquitination and degradation by the DCX(AMBRA1) complex. Ubiquitinated by the DCX(AMBRA1) complex during the transition from G1 to S cell phase, leading to its degradation: ubiquitination is dependent on Thr-280 phosphorylation. The DCX(AMBRA1) complex represents the major regulator of CCND2 stability during the G1/S transition. Polyubiquitinated by the SCF(FBXL2) complex, leading to proteasomal degradation.

It localises to the nucleus. It is found in the cytoplasm. Its subcellular location is the nucleus membrane. In terms of biological role, regulatory component of the cyclin D2-CDK4 (DC) complex that phosphorylates and inhibits members of the retinoblastoma (RB) protein family including RB1 and regulates the cell-cycle during G(1)/S transition. Phosphorylation of RB1 allows dissociation of the transcription factor E2F from the RB/E2F complex and the subsequent transcription of E2F target genes which are responsible for the progression through the G(1) phase. Hypophosphorylates RB1 in early G(1) phase. Cyclin D-CDK4 complexes are major integrators of various mitogenenic and antimitogenic signals. The chain is G1/S-specific cyclin-D2 (CCND2) from Bos taurus (Bovine).